The following is a 365-amino-acid chain: Methylthioribose-1-phosphate isomerase (365 aa).

Residues 53-55, arginine 90, and glutamine 201 each bind substrate; that span reads RGA. The active-site Proton donor is aspartate 242. Substrate is bound at residue 252-253; that stretch reads NK.

It belongs to the eIF-2B alpha/beta/delta subunits family. MtnA subfamily.

It catalyses the reaction 5-(methylsulfanyl)-alpha-D-ribose 1-phosphate = 5-(methylsulfanyl)-D-ribulose 1-phosphate. It functions in the pathway amino-acid biosynthesis; L-methionine biosynthesis via salvage pathway; L-methionine from S-methyl-5-thio-alpha-D-ribose 1-phosphate: step 1/6. In terms of biological role, catalyzes the interconversion of methylthioribose-1-phosphate (MTR-1-P) into methylthioribulose-1-phosphate (MTRu-1-P). The protein is Methylthioribose-1-phosphate isomerase of Methylorubrum extorquens (strain CM4 / NCIMB 13688) (Methylobacterium extorquens).